The chain runs to 379 residues: Succinyl-diaminopimelate desuccinylase (379 aa).

His-68 contacts Zn(2+). Asp-70 is a catalytic residue. Asp-101 lines the Zn(2+) pocket. Glu-135 serves as the catalytic Proton acceptor. Glu-136, Glu-164, and His-350 together coordinate Zn(2+).

This sequence belongs to the peptidase M20A family. DapE subfamily. In terms of assembly, homodimer. It depends on Zn(2+) as a cofactor. Requires Co(2+) as cofactor.

It catalyses the reaction N-succinyl-(2S,6S)-2,6-diaminopimelate + H2O = (2S,6S)-2,6-diaminopimelate + succinate. It participates in amino-acid biosynthesis; L-lysine biosynthesis via DAP pathway; LL-2,6-diaminopimelate from (S)-tetrahydrodipicolinate (succinylase route): step 3/3. Catalyzes the hydrolysis of N-succinyl-L,L-diaminopimelic acid (SDAP), forming succinate and LL-2,6-diaminopimelate (DAP), an intermediate involved in the bacterial biosynthesis of lysine and meso-diaminopimelic acid, an essential component of bacterial cell walls. The sequence is that of Succinyl-diaminopimelate desuccinylase from Bordetella parapertussis (strain 12822 / ATCC BAA-587 / NCTC 13253).